A 332-amino-acid polypeptide reads, in one-letter code: Aquaporin Lacbi1:317173 (332 aa).

Positions 1–20 are enriched in polar residues; it reads MSGQHQITEQSSRNPLSRVS. The disordered stretch occupies residues 1-45; the sequence is MSGQHQITEQSSRNPLSRVSTLLPEKPLSPTSTYAGTQKHPEAPR. Residues 1–66 lie on the Cytoplasmic side of the membrane; it reads MSGQHQITEQ…RNAIRKPMAE (66 aa). A helical transmembrane segment spans residues 67–87; the sequence is FFGVALLIIFGAGSACQVVLS. Topologically, residues 88–100 are extracellular; the sequence is TNPDVASSARGSF. The chain crosses the membrane as a helical span at residues 101–121; that stretch reads LSINFGWAIGIAMGVWVSGGI. Over 122-144 the chain is Cytoplasmic; it reads SGGHINPAITIAMATYRGFPWRK. Positions 127 to 129 match the NPA 1 motif; it reads NPA. Residues 145 to 165 traverse the membrane as a helical segment; sequence VPSYILAQVLGGVVGAGLVYA. The Extracellular segment spans residues 166–199; that stretch reads NYIHAIDIFEGGHHIRTQATASLFATYALPYMTQ. The helical transmembrane segment at 200-220 threads the bilayer; that stretch reads ASCFFSEFLATAVLSMMVFAL. Over 221–230 the chain is Cytoplasmic; it reads TDKRNHSPTN. Residues 231-251 form a helical membrane-spanning segment; the sequence is GLLPFALFILFVGLGASLGME. Over 252-283 the chain is Extracellular; that stretch reads TAYALNPARDFGPRLFLAMAGYGKALFNYRSQ. The NPA 2 signature appears at 257–259; the sequence is NPA. A helical transmembrane segment spans residues 284-304; it reads YWLWAPIIAPVLGAQAGGLLY. Residues 305–332 are Cytoplasmic-facing; sequence DTFLNDGDNSPIKWRCASSQEHQLAEVV.

It belongs to the MIP/aquaporin (TC 1.A.8) family.

Its subcellular location is the membrane. It carries out the reaction H2O(in) = H2O(out). It catalyses the reaction NH4(+)(in) = NH4(+)(out). In terms of biological role, water channel required to facilitate the transport of water across membranes. Acts as the most efficient Laccaria water channel. In addition to water, also shows strong ammonium transport activity. May be involved in fungal nitrogen (ammonium) support of the plant host in symbiosis. In Laccaria bicolor (strain S238N-H82 / ATCC MYA-4686) (Bicoloured deceiver), this protein is Aquaporin Lacbi1:317173.